A 1034-amino-acid polypeptide reads, in one-letter code: Error-prone DNA polymerase (1034 aa).

It belongs to the DNA polymerase type-C family. DnaE2 subfamily.

It is found in the cytoplasm. The enzyme catalyses DNA(n) + a 2'-deoxyribonucleoside 5'-triphosphate = DNA(n+1) + diphosphate. DNA polymerase involved in damage-induced mutagenesis and translesion synthesis (TLS). It is not the major replicative DNA polymerase. This chain is Error-prone DNA polymerase, found in Pseudomonas fluorescens (strain ATCC BAA-477 / NRRL B-23932 / Pf-5).